The chain runs to 229 residues: MSLLVQLDQKIAANGGLIVSCQPVPDSPLDKPEIVAAMALAAEQAGAVAIRIEGVANLQATRAVVSVPIIGIVKRDLEDSPVRITAYIEDVDALAQAGADIIAIDGTDRPRPVPVETLLARIHHHGLLAMTDCSTPEDGLACQKLGAEIIGTTLSGYTTPETPEEPDLALVKTLSDAGCRVIAEGRYNTPAQAADAMRHGAWAVTVGSAITRLEHICQWYNTAMKKAVL.

This sequence belongs to the NanE family.

The catalysed reaction is an N-acyl-D-glucosamine 6-phosphate = an N-acyl-D-mannosamine 6-phosphate. The protein operates within amino-sugar metabolism; N-acetylneuraminate degradation; D-fructose 6-phosphate from N-acetylneuraminate: step 3/5. Its function is as follows. Converts N-acetylmannosamine-6-phosphate (ManNAc-6-P) to N-acetylglucosamine-6-phosphate (GlcNAc-6-P). This is Putative N-acetylmannosamine-6-phosphate 2-epimerase from Escherichia coli O7:K1 (strain IAI39 / ExPEC).